The sequence spans 1148 residues: Phospholipid-transporting ATPase IB (1148 aa).

Over 1–54 (MSRATSVGDQLDVPARTIYLNQPHLNKFCDNQISTAKYSVVTFLPRFLYEQIRR) the chain is Cytoplasmic. Position 5 is a phosphothreonine (T5). The helical transmembrane segment at 55–75 (AANAFFLFIALLQQIPDVSPT) threads the bilayer. The Exoplasmic loop portion of the chain corresponds to 76–79 (GRYT). A helical transmembrane segment spans residues 80–100 (TLVPLIIILTIAGIKEIVEDF). Topologically, residues 101-276 (KRHKADNAVN…SNVEKVTNVQ (176 aa)) are cytoplasmic. A helical membrane pass occupies residues 277–297 (ILVLFGILLVMALVSSVGALY). The Exoplasmic loop portion of the chain corresponds to 298–324 (WNGSQGGKNWYIKKMDATSDNFGYNLL). Residues 325 to 345 (TFIILYNNLIPISLLVTLEVV) traverse the membrane as a helical segment. Over 346–847 (KYTQALFINW…CILYCFYKNV (502 aa)) the chain is Cytoplasmic. The active-site 4-aspartylphosphate intermediate is D388. 12 residues coordinate ATP: D388, K389, T390, E488, F529, K552, R585, T665, G666, D667, R755, and K761. Residue D388 participates in Mg(2+) binding. Residue T390 coordinates Mg(2+). Position 781 (D781) interacts with Mg(2+). The ATP site is built by N784 and D785. Mg(2+) is bound at residue D785. A helical transmembrane segment spans residues 848 to 868 (VLYIIELWFAFVNGFSGQILF). At 869-870 (ER) the chain is on the exoplasmic loop side. The helical transmembrane segment at 871 to 891 (WCIGLYNVIFTALPPFTLGIF) threads the bilayer. Residues 892 to 919 (ERSCSQESMLRFPQLYKITQNAEGFNTK) lie on the Cytoplasmic side of the membrane. A helical membrane pass occupies residues 920–940 (VFWGHCINALVHSLILFWFPM). Topologically, residues 941–957 (KALEHDTVLANGHATDY) are exoplasmic loop. A helical transmembrane segment spans residues 958-978 (LFVGNIVYTYVVVTVCLKAGL). Residues 979–988 (ETTAWTKFSH) lie on the Cytoplasmic side of the membrane. The helical transmembrane segment at 989–1009 (LAVWGSMLIWLVFFGIYSTIW) threads the bilayer. At 1010 to 1023 (PTIPIAPDMKGQAT) the chain is on the exoplasmic loop side. Residues 1024–1044 (MVLSSAHFWLGLFLVPTACLI) traverse the membrane as a helical segment. Residues 1045 to 1148 (EDVAWRAAKH…DTTKQKSRKK (104 aa)) lie on the Cytoplasmic side of the membrane. The tract at residues 1102–1126 (PPTLFRGSSLQQSMPHGYAFSQEEH) is disordered.

This sequence belongs to the cation transport ATPase (P-type) (TC 3.A.3) family. Type IV subfamily. In terms of assembly, component of a P4-ATPase flippase complex which consists of a catalytic alpha subunit and an accessory beta subunit. Interacts with TMEM30A to form a flippase complex. Requires Mg(2+) as cofactor. Expressed in retinal photoreceptor cells and testis.

Its subcellular location is the membrane. It is found in the golgi apparatus membrane. The protein resides in the endosome membrane. The protein localises to the cell membrane. It localises to the photoreceptor outer segment membrane. Its subcellular location is the photoreceptor inner segment membrane. The catalysed reaction is ATP + H2O + phospholipidSide 1 = ADP + phosphate + phospholipidSide 2.. The enzyme catalyses a 1,2-diacyl-sn-glycero-3-phospho-L-serine(out) + ATP + H2O = a 1,2-diacyl-sn-glycero-3-phospho-L-serine(in) + ADP + phosphate + H(+). It catalyses the reaction a 1,2-diacyl-sn-glycero-3-phosphoethanolamine(in) + ATP + H2O = a 1,2-diacyl-sn-glycero-3-phosphoethanolamine(out) + ADP + phosphate + H(+). Its activity is regulated as follows. ATPase activity is stimulated by phosphatidylserine (PS) and minimally by phosphatidylethanolamine (PE). ATPase activity is inhibited by N-ethylmaleimide (NEM) and vanadate. Flippase activity is inhibited by NEM and 1,2-dioleoyl-sn-glycero-3-phospho-L-serine (DOPS). Catalytic component of a P4-ATPase flippase complex which catalyzes the hydrolysis of ATP coupled to the transport of aminophospholipids from the outer to the inner leaflet of various membranes and ensures the maintenance of asymmetric distribution of phospholipids. Able to translocate phosphatidylserine, but not phosphatidylcholine. Phospholipid translocation seems also to be implicated in vesicle formation and in uptake of lipid signaling molecules. Reconstituted to liposomes, the ATP8A2:TMEM30A flippase complex predominantly transports phosphatidylserine (PS) and to a lesser extent phosphatidylethanolamine (PE). Phospholipid translocation is not associated with a countertransport of an inorganic ion or other charged substrate from the cytoplasmic side toward the exoplasm in connection with the phosphorylation from ATP. ATP8A2:TMEM30A may be involved in regulation of neurite outgrowth. Proposed to function in the generation and maintenance of phospholipid asymmetry in photoreceptor disk membranes and neuronal axon membranes. May be involved in vesicle trafficking in neuronal cells. Required for normal visual and auditory function; involved in photoreceptor and inner ear spiral ganglion cell survival. This is Phospholipid-transporting ATPase IB from Bos taurus (Bovine).